Reading from the N-terminus, the 886-residue chain is Isoleucine--tRNA ligase (886 aa).

The 'HIGH' region signature appears at 60–70; sequence PYANGDIHIGH. E546 contributes to the L-isoleucyl-5'-AMP binding site. Residues 587–591 carry the 'KMSKS' region motif; it reads KMSKS. K590 is an ATP binding site. Zn(2+) contacts are provided by C856, C859, C870, and C873.

The protein belongs to the class-I aminoacyl-tRNA synthetase family. IleS type 1 subfamily. As to quaternary structure, monomer. The cofactor is Zn(2+).

It is found in the cytoplasm. It carries out the reaction tRNA(Ile) + L-isoleucine + ATP = L-isoleucyl-tRNA(Ile) + AMP + diphosphate. Functionally, catalyzes the attachment of isoleucine to tRNA(Ile). As IleRS can inadvertently accommodate and process structurally similar amino acids such as valine, to avoid such errors it has two additional distinct tRNA(Ile)-dependent editing activities. One activity is designated as 'pretransfer' editing and involves the hydrolysis of activated Val-AMP. The other activity is designated 'posttransfer' editing and involves deacylation of mischarged Val-tRNA(Ile). This Mesomycoplasma hyopneumoniae (strain 232) (Mycoplasma hyopneumoniae) protein is Isoleucine--tRNA ligase.